The following is a 318-amino-acid chain: Homoserine kinase (318 aa).

97–107 is an ATP binding site; that stretch reads PIGSGLGSSAC.

It belongs to the GHMP kinase family. Homoserine kinase subfamily.

It is found in the cytoplasm. The catalysed reaction is L-homoserine + ATP = O-phospho-L-homoserine + ADP + H(+). It participates in amino-acid biosynthesis; L-threonine biosynthesis; L-threonine from L-aspartate: step 4/5. In terms of biological role, catalyzes the ATP-dependent phosphorylation of L-homoserine to L-homoserine phosphate. In Vibrio cholerae serotype O1 (strain M66-2), this protein is Homoserine kinase.